The chain runs to 143 residues: Large ribosomal subunit protein uL16 (143 aa).

Residues 1–26 (MSMALLPRRVKYRKSQRGSRKGNATR) form a disordered region. Basic residues predominate over residues 8 to 20 (RRVKYRKSQRGSR).

It belongs to the universal ribosomal protein uL16 family. As to quaternary structure, part of the 50S ribosomal subunit.

Its function is as follows. Binds 23S rRNA and is also seen to make contacts with the A and possibly P site tRNAs. In Methylacidiphilum infernorum (isolate V4) (Methylokorus infernorum (strain V4)), this protein is Large ribosomal subunit protein uL16.